The sequence spans 234 residues: Thioredoxin-dependent peroxide reductase, mitochondrial (234 aa).

The N-terminal 30 residues, M1–L30, are a transit peptide targeting the mitochondrion. In terms of domain architecture, Thioredoxin spans V40–F198. C85 functions as the Cysteine sulfenic acid (-SOH) intermediate in the catalytic mechanism.

This sequence belongs to the peroxiredoxin family. AhpC/Prx1 subfamily. In terms of assembly, homodimer; disulfide-linked, upon oxidation. 6 homodimers assemble to form a ring-like dodecamer. Also exists as a monomer, however the monomeric form is present at a much lower level than the homodimeric form. Expressed in thoracic flight muscles (at protein level). Detected in the head and body (at protein level).

The protein localises to the mitochondrion. It carries out the reaction a hydroperoxide + [thioredoxin]-dithiol = an alcohol + [thioredoxin]-disulfide + H2O. Thiol-specific peroxidase that catalyzes the reduction of hydrogen peroxide and organic hydroperoxides to water and alcohols, respectively. Plays a role in cell protection against oxidative stress by detoxifying peroxides. May be involved in aging-associated changes in the responsiveness to oxidative stress. Involved in the maintenance of global thiol redox homeostasis. Functions in the central nervous system (CNS) and in motor neurons and is essential for normal motor function. The sequence is that of Thioredoxin-dependent peroxide reductase, mitochondrial from Drosophila melanogaster (Fruit fly).